The chain runs to 348 residues: Probable purine nucleoside permease C285.05 (348 aa).

A signal peptide spans 1–21 (MLFLKLVASVLALMTIVPAQA).

Belongs to the NUP family.

Its subcellular location is the endoplasmic reticulum. In terms of biological role, probable nucleoside permease that transports adenosine and guanosine. The sequence is that of Probable purine nucleoside permease C285.05 from Schizosaccharomyces pombe (strain 972 / ATCC 24843) (Fission yeast).